Reading from the N-terminus, the 168-residue chain is Gremlin-2 (168 aa).

The N-terminal stretch at 1–21 (MFWKLSLTLLLVAVLVKVAET) is a signal peptide. Asparagine 40 is a glycosylation site (N-linked (GlcNAc...) asparagine). 4 disulfide bridges follow: cysteine 73–cysteine 123, cysteine 87–cysteine 137, cysteine 97–cysteine 155, and cysteine 101–cysteine 157. The CTCK domain occupies 73 to 163 (CKTQPLRQTV…HCRCMSVNLS (91 aa)). N-linked (GlcNAc...) asparagine glycosylation occurs at asparagine 161.

Belongs to the DAN family. Homodimer. Interacts with BMP2, BMP4 and BMP7, but has lower affinity for BMP7 than for BMP2 and BMP4. Binds heparin; this impairs the interaction with BMP2. Post-translationally, N-glycosylated. In terms of tissue distribution, highly expressed in the ovary, followed by brain, spleen, colon, kidney and uterus. In ovary expressed in granulosa cells of selective early antral follicles.

The protein resides in the secreted. Cytokine that inhibits the activity of BMP2 and BMP4 in a dose-dependent manner, and thereby modulates signaling by BMP family members. Contributes to the regulation of embryonic morphogenesis via BMP family members. Antagonizes BMP4-induced suppression of progesterone production in granulosa cells. This is Gremlin-2 (Grem2) from Mus musculus (Mouse).